The primary structure comprises 169 residues: Sorting nexin-24 (169 aa).

Met1 carries the post-translational modification N-acetylmethionine. Positions 1–125 (MEVYIPSFRH…SFDETESEES (125 aa)) constitute a PX domain. The a 1,2-diacyl-sn-glycero-3-phospho-(1D-myo-inositol-3-phosphate) site is built by Arg38, Ser40, Lys61, and Arg74. Residues Ser113 and Ser116 each carry the phosphoserine modification.

This sequence belongs to the sorting nexin family.

It is found in the cytoplasmic vesicle membrane. May be involved in several stages of intracellular trafficking. This is Sorting nexin-24 (Snx24) from Rattus norvegicus (Rat).